The chain runs to 365 residues: MWPLSHRHLCLAFLLVCVLSAISFFLHIYQDSIRHGLGLSILCPDRLVTAPVAIFCLPDTPMSPNTSSPCPQHPASLSGTWTIYPDGRFGNQMGQYATLLALAQLNGRRAFILPAMHATLAPVFRITLPVLAPEVDSSTPWRELQLHDWMSEEYADLGDPFLKLSGFPCSWTFFHHLREQIRSEFTLHDHLREEAQSVLRRLRLGRSGDRPRTFVGVHVRRGDYLQVMPQRWKGVVGSSAYLREAMDWFRARHEAPVFVVTSNGMEWCRENIDASKGDVMFAGDGQEASPWKDFALLTQCNHTIMTIGTFGFWAAYLAGGDTVYLANFTLPDSEFLKIFKPEAAFLPEWVGINADLSSLWTLAEP.

Residues 1–8 (MWPLSHRH) are Cytoplasmic-facing. The helical; Signal-anchor for type II membrane protein transmembrane segment at 9–25 (LCLAFLLVCVLSAISFF) threads the bilayer. Residues 26–365 (LHIYQDSIRH…LSSLWTLAEP (340 aa)) are Lumenal-facing. N65, N301, and N327 each carry an N-linked (GlcNAc...) asparagine glycan.

The protein belongs to the glycosyltransferase 11 family.

The protein resides in the golgi apparatus. It is found in the golgi stack membrane. It carries out the reaction a beta-D-galactosyl-(1-&gt;4)-N-acetyl-beta-D-glucosaminyl derivative + GDP-beta-L-fucose = an alpha-L-Fuc-(1-&gt;2)-beta-D-Gal-(1-&gt;4)-beta-D-GlcNAc derivative + GDP + H(+). The catalysed reaction is a ganglioside GA1 + GDP-beta-L-fucose = a ganglioside Fuc-GA1 + GDP + H(+). It catalyses the reaction a beta-D-Gal-(1-&gt;3)-beta-D-GlcNAc-(1-&gt;3)-beta-D-Gal-(1-&gt;4)-beta-D-Glc-(1&lt;-&gt;1')-Cer(d18:1(4E)) + GDP-beta-L-fucose = alpha-L-fucosyl-(1-&gt;2)- beta-D-galactosyl-(1-&gt;3)-N-acetyl-beta-D-glucosaminyl-(1-&gt;3)-beta-D-galactosyl-(1-&gt;4)-beta-D-glucosyl-(1&lt;-&gt;1')-N-acylsphing-4-enine + GDP + H(+). The enzyme catalyses a neolactoside nLc4Cer(d18:1(4E)) + GDP-beta-L-fucose = a neolactoside IV(2)-alpha-Fuc-nLc4Cer(d18:1(4E)) + GDP + H(+). It carries out the reaction a ganglioside GM1 + GDP-beta-L-fucose = a ganglioside Fuc-GM1 + GDP + H(+). The catalysed reaction is beta-D-galactosyl-(1-&gt;3)-N-acetyl-D-galactosamine + GDP-beta-L-fucose = alpha-L-fucosyl-(1-&gt;2)-beta-D-galactosyl-(1-&gt;3)-N-acetyl-D-galactosamine + GDP + H(+). It functions in the pathway protein modification; protein glycosylation. In terms of biological role, catalyzes the transfer of L-fucose, from a guanosine diphosphate-beta-L-fucose, to the terminal galactose residue of glycoconjugates through an alpha(1,2) linkage leading to H antigen synthesis that is an intermediate substrate in the synthesis of ABO blood group antigens. H antigen is essential for maturation of the glomerular layer of the main olfactory bulb, in cell migration and early cell-cell contacts during tumor associated angiogenesis. Preferentially fucosylates soluble lactose and to a lesser extent fucosylates glycolipids gangliosides GA1 and GM1a. This is Galactoside alpha-(1,2)-fucosyltransferase 1 from Leontocebus fuscicollis (Brown-mantled tamarin).